We begin with the raw amino-acid sequence, 312 residues long: Zinc transporter ZitB (312 aa).

6 helical membrane-spanning segments follow: residues 16-36, 40-60, 81-101, 117-137, 153-173, and 177-197; these read LLIA…GGWL, LALL…FIAL, LTTL…ILIV, TPML…FWIL, LHVL…IVIL, and WTPI…RSAW.

It belongs to the cation diffusion facilitator (CDF) transporter (TC 2.A.4) family. SLC30A subfamily.

Its subcellular location is the cell inner membrane. Involved in zinc efflux across the cytoplasmic membrane, thus reducing zinc accumulation in the cytoplasm and rendering bacteria more resistant to zinc. It may contribute to zinc homeostasis at low concentrations of zinc. In Yersinia pestis, this protein is Zinc transporter ZitB.